A 168-amino-acid chain; its full sequence is Photosystem I assembly protein Ycf3 (168 aa).

3 TPR repeats span residues 35–68 (AFTY…EIDP), 72–105 (SYIL…NPFL), and 120–153 (GEQA…TPGN).

It belongs to the Ycf3 family.

It is found in the plastid. The protein resides in the chloroplast thylakoid membrane. Essential for the assembly of the photosystem I (PSI) complex. May act as a chaperone-like factor to guide the assembly of the PSI subunits. The polypeptide is Photosystem I assembly protein Ycf3 (Ranunculus macranthus (Large buttercup)).